The following is a 502-amino-acid chain: Probable glycine dehydrogenase (decarboxylating) subunit 2 (502 aa).

Lysine 273 is subject to N6-(pyridoxal phosphate)lysine.

It belongs to the GcvP family. C-terminal subunit subfamily. As to quaternary structure, the glycine cleavage system is composed of four proteins: P, T, L and H. In this organism, the P 'protein' is a heterodimer of two subunits. Requires pyridoxal 5'-phosphate as cofactor.

The enzyme catalyses N(6)-[(R)-lipoyl]-L-lysyl-[glycine-cleavage complex H protein] + glycine + H(+) = N(6)-[(R)-S(8)-aminomethyldihydrolipoyl]-L-lysyl-[glycine-cleavage complex H protein] + CO2. Functionally, the glycine cleavage system catalyzes the degradation of glycine. The P protein binds the alpha-amino group of glycine through its pyridoxal phosphate cofactor; CO(2) is released and the remaining methylamine moiety is then transferred to the lipoamide cofactor of the H protein. The polypeptide is Probable glycine dehydrogenase (decarboxylating) subunit 2 (Pyrococcus furiosus (strain ATCC 43587 / DSM 3638 / JCM 8422 / Vc1)).